A 1400-amino-acid polypeptide reads, in one-letter code: DNA-directed RNA polymerase subunit beta' (1400 aa).

Zn(2+) is bound by residues C70, C72, C85, and C88. Mg(2+) is bound by residues D460, D462, and D464. Residues C814, C888, C895, and C898 each coordinate Zn(2+). Residues 1368 to 1400 (RQAKRAEAQEGPSAEQATDNLAALLNAGFSSDE) form a disordered region.

Belongs to the RNA polymerase beta' chain family. As to quaternary structure, the RNAP catalytic core consists of 2 alpha, 1 beta, 1 beta' and 1 omega subunit. When a sigma factor is associated with the core the holoenzyme is formed, which can initiate transcription. Mg(2+) is required as a cofactor. Requires Zn(2+) as cofactor.

The enzyme catalyses RNA(n) + a ribonucleoside 5'-triphosphate = RNA(n+1) + diphosphate. In terms of biological role, DNA-dependent RNA polymerase catalyzes the transcription of DNA into RNA using the four ribonucleoside triphosphates as substrates. The protein is DNA-directed RNA polymerase subunit beta' of Vibrio parahaemolyticus serotype O3:K6 (strain RIMD 2210633).